The primary structure comprises 145 residues: Small ribosomal subunit protein eS19 (145 aa).

It belongs to the eukaryotic ribosomal protein eS19 family. In terms of assembly, part of the 30S ribosomal subunit.

Functionally, may be involved in maturation of the 30S ribosomal subunit. In Methanothermobacter thermautotrophicus (strain ATCC 29096 / DSM 1053 / JCM 10044 / NBRC 100330 / Delta H) (Methanobacterium thermoautotrophicum), this protein is Small ribosomal subunit protein eS19.